A 358-amino-acid chain; its full sequence is MNRILIIAGGTGGHIFPALAVARELREQEVDVQWLGVKGGLEEKLVPDSFPLHLIQIKAFRGKRGLQQLLMPLRLVRAVFQAYRIIRQFKPDVILGMGGYVAGPGGLAAWITRTPLIIHEQNSIPGLTNRVLAKMAKFILQGFPDTFPQNRKVITTGNPVRTELVKMPLPQVRLAARRGPLRILVLGGSQGARSINQKMLAALSSYPRSEEIAVWHQTGQRDFEFIQKEYEKIKIEAKVDNFISDMAGAYGWADLVVCRAGALTVCEIASVGVASIFIPYPHAVDNHQFHNARFLEQAGAAIIISEESLAETDLMRWFEQFAQDRDRLLTMAENARKLAKPEAVQRVIAQCKKFYAAR.

UDP-N-acetyl-alpha-D-glucosamine-binding positions include 11 to 13 (TGG), Asn122, Arg161, Ser189, Ile243, 262 to 267 (ALTVCE), and Gln288.

Belongs to the glycosyltransferase 28 family. MurG subfamily.

The protein localises to the cell inner membrane. The enzyme catalyses di-trans,octa-cis-undecaprenyl diphospho-N-acetyl-alpha-D-muramoyl-L-alanyl-D-glutamyl-meso-2,6-diaminopimeloyl-D-alanyl-D-alanine + UDP-N-acetyl-alpha-D-glucosamine = di-trans,octa-cis-undecaprenyl diphospho-[N-acetyl-alpha-D-glucosaminyl-(1-&gt;4)]-N-acetyl-alpha-D-muramoyl-L-alanyl-D-glutamyl-meso-2,6-diaminopimeloyl-D-alanyl-D-alanine + UDP + H(+). It participates in cell wall biogenesis; peptidoglycan biosynthesis. Functionally, cell wall formation. Catalyzes the transfer of a GlcNAc subunit on undecaprenyl-pyrophosphoryl-MurNAc-pentapeptide (lipid intermediate I) to form undecaprenyl-pyrophosphoryl-MurNAc-(pentapeptide)GlcNAc (lipid intermediate II). This is UDP-N-acetylglucosamine--N-acetylmuramyl-(pentapeptide) pyrophosphoryl-undecaprenol N-acetylglucosamine transferase from Coxiella burnetii (strain Dugway 5J108-111).